The chain runs to 538 residues: Calcyphosin-2 (538 aa).

The segment covering 134 to 146 (RNAENTKSNVTHK) has biased composition (polar residues). Residues 134 to 154 (RNAENTKSNVTHKQSPRNKID) form a disordered region. EF-hand domains follow at residues 426-461 (RILT…FHLE), 462-497 (VSEK…EMNE), and 498-533 (YRKS…KKHS). The Ca(2+) site is built by Asp439, Asn443, Asp450, Asn477, Asn479, Lys481, Glu486, Asp511, Asn513, Ser515, Ser517, and Asn522.

Abundantly expressed in many tissues. Expressed in brain, colon, heart, kidney, liver, lung, liver, pancreas, placenta, skeletal muscle, testis and thymus. Highest expression in colon, testis, lung, placenta and brain.

This chain is Calcyphosin-2, found in Homo sapiens (Human).